The primary structure comprises 185 residues: Ribosome-recycling factor (185 aa).

This sequence belongs to the RRF family.

It is found in the cytoplasm. Its function is as follows. Responsible for the release of ribosomes from messenger RNA at the termination of protein biosynthesis. May increase the efficiency of translation by recycling ribosomes from one round of translation to another. This Streptococcus agalactiae serotype V (strain ATCC BAA-611 / 2603 V/R) protein is Ribosome-recycling factor.